The primary structure comprises 226 residues: E3 ubiquitin-protein ligase RNF186 (226 aa).

An RING-type zinc finger spans residues 39–85 (CLVCREPYNCARSPKLLSCQHTFCAVCLKLLLYVQEDTWSIPCPLCR). Helical transmembrane passes span 157–177 (HLLLLALVIVLILPFIYPGVI) and 179–199 (WVLAFVIALALLMSTLFCCHP).

As to quaternary structure, interacts with BNIP1. In terms of processing, polyubiquitinated. 'Lys-29'-linked autoubiquitination leads to proteasomal degradation.

It is found in the endoplasmic reticulum membrane. It catalyses the reaction S-ubiquitinyl-[E2 ubiquitin-conjugating enzyme]-L-cysteine + [acceptor protein]-L-lysine = [E2 ubiquitin-conjugating enzyme]-L-cysteine + N(6)-ubiquitinyl-[acceptor protein]-L-lysine.. It functions in the pathway protein modification; protein ubiquitination. E3 ubiquitin protein ligase that is part of an apoptotic signaling pathway activated by endoplasmic reticulum stress. Stimulates the expression of proteins specific of the unfolded protein response (UPR), ubiquitinates BNIP1 and regulates its localization to the mitochondrion and induces calcium release from the endoplasmic reticulum that ultimately leads to cell apoptosis. Plays a role in the maintenance of intestinal homeostasis and clearance of enteric pathogens. Upon NOD2 stimulation, ubiquitinates the ER stress sensor activating transcription factor 6/ATF6 and promotes the unfolded protein response UPR. Participates in basal level of autophagy maintenance by regulating the ubiquitination of EPHB2. Upon stimulation by ligand EFNB1, ubiquitinates EPHB2 and further recruits MAP1LC3B for autophagy induction. Controls nutrient sensing by ubiquitinating Sestrin-2/SESN2, which is an intracellular sensor of cytosolic leucine and inhibitor of mTORC1 activity. The polypeptide is E3 ubiquitin-protein ligase RNF186 (Mus musculus (Mouse)).